Consider the following 480-residue polypeptide: MKNQHNTFWVLCLLFVMFDETFSAFPFGNGRIQFDPIRENSSDNIECFLDYMELWVPRKQINGLVLWLSQIMRFPVSLSSLDRSNQQLSRCKYFLDADADGNFLFRVHYTGCYVQTQEGFYKLEIHMVKKTSSGRGQSNRYLMRCPAMTAQLGREKLRCDPNYVQVSRPIPLGNSNDQADWFFSLRGELVVSIEDASLIGVEVDVSNSSVTVSGLRGQLLDGIKILDRQIDNLHLWLAHGFYAYSLEASCPSVSQHPGEEVILHIPKQRVGLVKRGSYSADILTLKNLIVGQSANVTVTVTENKQFVVINIPSHEVLQRQDCYTTIGNNPGVQFFYCIDLVLEFTEMAYPINWTLENYYECSVRVPQMIQPKPTTAETFHKIKLELHTTPRSETRTALVITPTQDNTLASTSVTLAAKLRESVHSAIVQESSKTEMSASGYDAELDHVASGEYFNRIEGSGYYAETNISAALRLRKCHHL.

The signal sequence occupies residues 1–23; sequence MKNQHNTFWVLCLLFVMFDETFS.

Expressed specifically by cells of the ciliated left-right organizer.

It is found in the secreted. This Xenopus tropicalis (Western clawed frog) protein is Ciliated left-right organizer protein containing ZP-N domains homolog.